The sequence spans 314 residues: Ornithine carbamoyltransferase (314 aa).

Residues 61-64, Gln-88, Arg-112, and 139-142 contribute to the carbamoyl phosphate site; these read STRT and HPCQ. Residues Asn-170, Asp-234, and 238–239 each bind L-ornithine; that span reads SM. Carbamoyl phosphate-binding positions include 274-275 and Arg-302; that span reads CL.

The protein belongs to the aspartate/ornithine carbamoyltransferase superfamily. OTCase family.

The protein localises to the cytoplasm. The catalysed reaction is carbamoyl phosphate + L-ornithine = L-citrulline + phosphate + H(+). The protein operates within amino-acid biosynthesis; L-arginine biosynthesis; L-arginine from L-ornithine and carbamoyl phosphate: step 1/3. Its function is as follows. Reversibly catalyzes the transfer of the carbamoyl group from carbamoyl phosphate (CP) to the N(epsilon) atom of ornithine (ORN) to produce L-citrulline. In Anoxybacillus flavithermus (strain DSM 21510 / WK1), this protein is Ornithine carbamoyltransferase.